The primary structure comprises 87 residues: Prolactin-releasing peptide (87 aa).

The N-terminal stretch at 1–22 is a signal peptide; that stretch reads MKVLRAWLLCLLMLGLALRGAA. At Phe53 the chain carries Phenylalanine amide. A propeptide spanning residues 58-87 is cleaved from the precursor; that stretch reads ATLGDVPKPGLRPRLTCFPLEGGAMSSQDG.

In terms of tissue distribution, medulla oblongata and hypothalamus.

Its subcellular location is the secreted. Its function is as follows. Stimulates prolactin (PRL) release and regulates the expression of prolactin through its receptor GPR10. May stimulate lactotrophs directly to secrete PRL. The chain is Prolactin-releasing peptide (PRLH) from Homo sapiens (Human).